Here is a 501-residue protein sequence, read N- to C-terminus: Lysine--tRNA ligase (501 aa).

Mg(2+) is bound by residues E411 and E418.

The protein belongs to the class-II aminoacyl-tRNA synthetase family. In terms of assembly, homodimer. Mg(2+) serves as cofactor.

The protein resides in the cytoplasm. It catalyses the reaction tRNA(Lys) + L-lysine + ATP = L-lysyl-tRNA(Lys) + AMP + diphosphate. The polypeptide is Lysine--tRNA ligase (Clostridium perfringens (strain 13 / Type A)).